Consider the following 469-residue polypeptide: 3-isopropylmalate dehydratase large subunit (469 aa).

[4Fe-4S] cluster contacts are provided by Cys-349, Cys-409, and Cys-412. The tract at residues 424–443 is disordered; sequence QISASSSNRNFKGRQGSPSG.

Belongs to the aconitase/IPM isomerase family. LeuC type 1 subfamily. In terms of assembly, heterodimer of LeuC and LeuD. It depends on [4Fe-4S] cluster as a cofactor.

The enzyme catalyses (2R,3S)-3-isopropylmalate = (2S)-2-isopropylmalate. It functions in the pathway amino-acid biosynthesis; L-leucine biosynthesis; L-leucine from 3-methyl-2-oxobutanoate: step 2/4. Functionally, catalyzes the isomerization between 2-isopropylmalate and 3-isopropylmalate, via the formation of 2-isopropylmaleate. This chain is 3-isopropylmalate dehydratase large subunit, found in Thermosynechococcus vestitus (strain NIES-2133 / IAM M-273 / BP-1).